Reading from the N-terminus, the 135-residue chain is MATFHFDLVSPEMVAFSGEVDQVDIPGAEGDFGVLAGHAPVVAVIRPGILTVTAGGAQQKIVVLGGIAEVSEKGLTVLADVATATADVDMQDFAETITTMEQQLPGKVGDELDRSIERLDHYKSIQHQLSTTAMH.

Belongs to the ATPase epsilon chain family. In terms of assembly, F-type ATPases have 2 components, CF(1) - the catalytic core - and CF(0) - the membrane proton channel. CF(1) has five subunits: alpha(3), beta(3), gamma(1), delta(1), epsilon(1). CF(0) has three main subunits: a, b and c.

Its subcellular location is the cell inner membrane. Its function is as follows. Produces ATP from ADP in the presence of a proton gradient across the membrane. In Rhodopseudomonas palustris (strain HaA2), this protein is ATP synthase epsilon chain.